The primary structure comprises 72 residues: Translation initiation factor IF-1 (72 aa).

In terms of domain architecture, S1-like spans 1 to 72; the sequence is MSKEDAIEVM…TRGRIVYRYK (72 aa).

This sequence belongs to the IF-1 family. In terms of assembly, component of the 30S ribosomal translation pre-initiation complex which assembles on the 30S ribosome in the order IF-2 and IF-3, IF-1 and N-formylmethionyl-tRNA(fMet); mRNA recruitment can occur at any time during PIC assembly.

The protein resides in the cytoplasm. In terms of biological role, one of the essential components for the initiation of protein synthesis. Stabilizes the binding of IF-2 and IF-3 on the 30S subunit to which N-formylmethionyl-tRNA(fMet) subsequently binds. Helps modulate mRNA selection, yielding the 30S pre-initiation complex (PIC). Upon addition of the 50S ribosomal subunit IF-1, IF-2 and IF-3 are released leaving the mature 70S translation initiation complex. The chain is Translation initiation factor IF-1 from Koribacter versatilis (strain Ellin345).